The chain runs to 450 residues: MARRYFGTDGIRGQSNVFPMTPDLAMRVGIAVGTIFRRGHHRHRVVIGKDTRLSGYMLENALVAGFTAAGLDVFLLGPIPTPAVAMLTRSLRADIGVMISASHNPFSDNGIKLFGPDGYKLSDELELEIEDLLDKDIYAQLAKPAEIGRAKRVDGDIYRYIEFVKRTLPRDVTLSGLRIAIDCANGAAYKVAPAALWELGAEVVTIGNEPNGININLECGSTHPEALQKKLHEVRADIGIALDGDADRVIIVDERGEIVDGDQLMAVIADSWAADNTLRGGGIVATVMSNLGLERFLGDKGLTLARTKVGDRYVVEHMRNHNFNVGGEQSGHIVLSDYGTTGDGLVAALQVLAKVKRSGLTVSEVCRKFEPVPQLLKNVRISGGKPLENPIVLQAIADAESALANNGRLVIRPSGTEPLIRVMAEGDDSAKVEKIVNDLVGVISSARSAA.

S102 acts as the Phosphoserine intermediate in catalysis. 4 residues coordinate Mg(2+): S102, D243, D245, and D247. A Phosphoserine modification is found at S102.

It belongs to the phosphohexose mutase family. Requires Mg(2+) as cofactor. Post-translationally, activated by phosphorylation.

It catalyses the reaction alpha-D-glucosamine 1-phosphate = D-glucosamine 6-phosphate. Catalyzes the conversion of glucosamine-6-phosphate to glucosamine-1-phosphate. The protein is Phosphoglucosamine mutase of Agrobacterium fabrum (strain C58 / ATCC 33970) (Agrobacterium tumefaciens (strain C58)).